Consider the following 568-residue polypeptide: Potassium-transporting ATPase potassium-binding subunit (568 aa).

Transmembrane regions (helical) follow at residues 7 to 27, 67 to 87, 137 to 157, 180 to 200, 258 to 278, 288 to 308, 332 to 352, 361 to 381, 384 to 404, 421 to 441, 488 to 508, and 535 to 555; these read LLIT…GNII, YALA…TLLV, GLTV…FALI, LYLL…QGVI, FIQI…FGQV, LLWA…YAEL, FGIL…CGAV, ALGG…FGGV, GLYG…LMIG, MVAL…ALTI, LLLA…VLAI, and LLIL…LILG.

Belongs to the KdpA family. The system is composed of three essential subunits: KdpA, KdpB and KdpC.

It localises to the cell inner membrane. Functionally, part of the high-affinity ATP-driven potassium transport (or Kdp) system, which catalyzes the hydrolysis of ATP coupled with the electrogenic transport of potassium into the cytoplasm. This subunit binds the periplasmic potassium ions and delivers the ions to the membrane domain of KdpB through an intramembrane tunnel. The polypeptide is Potassium-transporting ATPase potassium-binding subunit (Photorhabdus laumondii subsp. laumondii (strain DSM 15139 / CIP 105565 / TT01) (Photorhabdus luminescens subsp. laumondii)).